The chain runs to 604 residues: Tyrosine-protein kinase transforming protein erbB (604 aa).

Residues 132–399 (FKKVKVLGSG…KMARDPPRYL (268 aa)) form the Protein kinase domain. ATP-binding positions include 138-146 (LGSGAFGTI) and Lys165. The active-site Proton acceptor is the Asp257.

Belongs to the protein kinase superfamily. Tyr protein kinase family. EGF receptor subfamily.

It catalyses the reaction L-tyrosyl-[protein] + ATP = O-phospho-L-tyrosyl-[protein] + ADP + H(+). Its function is as follows. The v-erbB oncogene transforms avian fibroblasts and erythroblasts in culture and induces sarcomas and erythroleukemias in chickens. It is a truncated and mutated version of the receptor for epidermal growth factor. This chain is Tyrosine-protein kinase transforming protein erbB (V-ERBB), found in Galliformes.